The sequence spans 741 residues: Exostosin-1b (741 aa).

The Cytoplasmic portion of the chain corresponds to 1-7; it reads MQAKKRY. The chain crosses the membrane as a helical; Signal-anchor for type II membrane protein span at residues 8–28; sequence LISLLTGAFLVLLIYLGGGGV. At 29–741 the chain is on the lumenal side; the sequence is PGPAAPGSRS…RKKYREIERL (713 aa). 2 N-linked (GlcNAc...) asparagine glycosylation sites follow: N84 and N325. Residues R435, R544, D560, E561, D562, E648, D649, and R696 each coordinate UDP-N-acetyl-alpha-D-glucosamine. D562 serves as a coordination point for Mn(2+). C647 and C699 are oxidised to a cystine. The active site involves D649.

The protein belongs to the glycosyltransferase 47 family. The cofactor is Mn(2+).

The protein resides in the endoplasmic reticulum membrane. The catalysed reaction is 3-O-{[(1-&gt;4)-beta-D-GlcA-(1-&gt;4)-alpha-D-GlcNAc](n)-(1-&gt;4)-beta-D-GlcA-(1-&gt;3)-beta-D-Gal-(1-&gt;3)-beta-D-Gal-(1-&gt;4)-beta-D-Xyl}-L-seryl-[protein] + UDP-N-acetyl-alpha-D-glucosamine = 3-O-{alpha-D-GlcNAc-[(1-&gt;4)-beta-D-GlcA-(1-&gt;4)-alpha-D-GlcNAc](n)-(1-&gt;4)-beta-D-GlcA-(1-&gt;3)-beta-D-Gal-(1-&gt;3)-beta-D-Gal-(1-&gt;4)-beta-D-Xyl}-L-seryl-[protein] + UDP + H(+). It catalyses the reaction 3-O-{alpha-D-GlcNAc-[(1-&gt;4)-beta-D-GlcA-(1-&gt;4)-alpha-D-GlcNAc](n)-(1-&gt;4)-beta-D-GlcA-(1-&gt;3)-beta-D-Gal-(1-&gt;3)-beta-D-Gal-(1-&gt;4)-beta-D-Xyl}-L-seryl-[protein] + UDP-alpha-D-glucuronate = 3-O-{[(1-&gt;4)-beta-D-GlcA-(1-&gt;4)-alpha-D-GlcNAc](n+1)-(1-&gt;4)-beta-D-GlcA-(1-&gt;3)-beta-D-Gal-(1-&gt;3)-beta-D-Gal-(1-&gt;4)-beta-D-Xyl}-L-seryl-[protein] + UDP + H(+). It functions in the pathway protein modification; protein glycosylation. In terms of biological role, glycosyltransferase required for the biosynthesis of heparan-sulfate. The protein is Exostosin-1b (ext1b) of Danio rerio (Zebrafish).